The following is a 259-amino-acid chain: Potassium/proton antiporter CemA (259 aa).

The next 4 helical transmembrane spans lie at 47–67, 136–156, 184–204, and 219–239; these read CLLV…EPWV, IITH…YLVM, ILLA…ELLI, and IISS…KYWI.

It belongs to the CemA family.

The protein resides in the plastid. The protein localises to the chloroplast inner membrane. The enzyme catalyses K(+)(in) + H(+)(out) = K(+)(out) + H(+)(in). Its function is as follows. Contributes to K(+)/H(+) antiport activity by supporting proton efflux to control proton extrusion and homeostasis in chloroplasts in a light-dependent manner to modulate photosynthesis. Prevents excessive induction of non-photochemical quenching (NPQ) under continuous-light conditions. Indirectly promotes efficient inorganic carbon uptake into chloroplasts. The sequence is that of Potassium/proton antiporter CemA from Welwitschia mirabilis (Tree tumbo).